Consider the following 121-residue polypeptide: Cell division protein FtsL (121 aa).

The Cytoplasmic portion of the chain corresponds to 1–34 (MISRVTEALSKVKGSIGSNERHALPGVIGDDLLR). Residues 35–57 (FGKLPLCLFICIILTAVTVVTTA) form a helical membrane-spanning segment. Topologically, residues 58-121 (HHTRLLTAQR…PSQENIVVQK (64 aa)) are periplasmic.

It belongs to the FtsL family. In terms of assembly, part of a complex composed of FtsB, FtsL and FtsQ.

Its subcellular location is the cell inner membrane. Its function is as follows. Essential cell division protein. May link together the upstream cell division proteins, which are predominantly cytoplasmic, with the downstream cell division proteins, which are predominantly periplasmic. The sequence is that of Cell division protein FtsL from Salmonella typhimurium (strain LT2 / SGSC1412 / ATCC 700720).